Here is a 407-residue protein sequence, read N- to C-terminus: Schlafen-like protein 1 (407 aa).

Disordered stretches follow at residues 1-28 (MTPM…LPEL) and 137-191 (AQGP…CQGR). A compositionally biased stretch (low complexity) spans 155 to 167 (GLSPGPSPGSGVP). A compositionally biased stretch (polar residues) spans 181–190 (QAQQLQSCQG). 261 to 268 (GVEDSGLV) provides a ligand contact to ATP. Positions 366-398 (RQRWLVELGKLEEKMKALMMEKEQLQQQLQQHG) form a coiled coil.

It belongs to the Schlafen family. Subgroup I subfamily.

The sequence is that of Schlafen-like protein 1 (SLFNL1) from Homo sapiens (Human).